A 571-amino-acid polypeptide reads, in one-letter code: Gag-Pro polyprotein (571 aa).

Gly-2 carries N-myristoyl glycine; by host lipidation. The PPXY motif motif lies at 100–103; sequence PPPY. 2 consecutive repeats follow at residues 342–362 and 367–387; these read PPPGPCYRCLKEGHWARDCPT and PPPGPCPICKDPSHWKRDCPT. CCHC-type zinc fingers lie at residues 345 to 362 and 370 to 387; these read GPCYRCLKEGHWARDCPT and GPCPICKDPSHWKRDCPT. The Peptidase A2 domain maps to 447–525; sequence ALMLVDTGAE…DKWQILGRDV (79 aa). Asp-452 functions as the Protease; shared with dimeric partner in the catalytic mechanism.

As to quaternary structure, homodimer; the homodimers are part of the immature particles. Interacts with human TSG101 and NEDD4; these interactions are essential for budding and release of viral particles. Homodimer; further assembles as homohexamers. In terms of processing, specific enzymatic cleavages by the viral protease yield mature proteins. The polyprotein is cleaved during and after budding, this process is termed maturation. The protease is autoproteolytically processed at its N- and C-termini. Post-translationally, gag polyprotein: Myristoylated. Myristoylation of the matrix (MA) domain mediates the transport and binding of Gag polyproteins to the host plasma membrane and is required for the assembly of viral particles.

The protein localises to the virion. In terms of biological role, the matrix domain targets Gag, Gag-Pro and Gag-Pro-Pol polyproteins to the plasma membrane via a multipartite membrane binding signal, that includes its myristoylated N-terminus. Functionally, matrix protein. Its function is as follows. Forms the spherical core of the virus that encapsulates the genomic RNA-nucleocapsid complex. Binds strongly to viral nucleic acids and promote their aggregation. Also destabilizes the nucleic acids duplexes via highly structured zinc-binding motifs. In terms of biological role, the aspartyl protease mediates proteolytic cleavages of Gag and Gag-Pol polyproteins during or shortly after the release of the virion from the plasma membrane. Cleavages take place as an ordered, step-wise cascade to yield mature proteins. This process is called maturation. Displays maximal activity during the budding process just prior to particle release from the cell. The sequence is that of Gag-Pro polyprotein from Bos taurus (Bovine).